A 231-amino-acid polypeptide reads, in one-letter code: NADH-ubiquinone oxidoreductase chain 4 (231 aa).

Transmembrane regions (helical) follow at residues Pro1–Ile21, Met34–Leu54, Ile63–Gly85, Ala89–Tyr111, Ile128–Pro148, and Phe156–Ser176.

The protein belongs to the complex I subunit 4 family.

It localises to the mitochondrion membrane. The enzyme catalyses a ubiquinone + NADH + 5 H(+)(in) = a ubiquinol + NAD(+) + 4 H(+)(out). Its function is as follows. Core subunit of the mitochondrial membrane respiratory chain NADH dehydrogenase (Complex I) that is believed to belong to the minimal assembly required for catalysis. Complex I functions in the transfer of electrons from NADH to the respiratory chain. The immediate electron acceptor for the enzyme is believed to be ubiquinone. This chain is NADH-ubiquinone oxidoreductase chain 4 (MT-ND4), found in Bothriechis schlegelii (Eyelash palm pitviper).